Reading from the N-terminus, the 805-residue chain is Leucine--tRNA ligase (805 aa).

The 'HIGH' region motif lies at 40-51 (PYPSGQGLHVGH). The short motif at 577 to 581 (KMSKS) is the 'KMSKS' region element. ATP is bound at residue K580.

It belongs to the class-I aminoacyl-tRNA synthetase family.

The protein resides in the cytoplasm. It catalyses the reaction tRNA(Leu) + L-leucine + ATP = L-leucyl-tRNA(Leu) + AMP + diphosphate. The chain is Leucine--tRNA ligase from Pediococcus pentosaceus (strain ATCC 25745 / CCUG 21536 / LMG 10740 / 183-1w).